Consider the following 485-residue polypeptide: Taxane 13-alpha-hydroxylase (485 aa).

Cysteine 431 lines the heme pocket.

Belongs to the cytochrome P450 family. It depends on heme as a cofactor.

The catalysed reaction is taxa-4(20),11-dien-5alpha-ol + reduced [NADPH--hemoprotein reductase] + O2 = taxa-4(20),11-dien-5alpha,13alpha-diol + oxidized [NADPH--hemoprotein reductase] + H2O + H(+). It participates in alkaloid biosynthesis; taxol biosynthesis. Functionally, involved in the transformation of a taxadienyl acetate by hydroxylation at C13 to yield taxadien-5-alpha-acetoxy-13-alpha-ol. The polypeptide is Taxane 13-alpha-hydroxylase (CYP725A2) (Taxus cuspidata (Japanese yew)).